The following is a 145-amino-acid chain: Acidic phospholipase A2 S1-11 (145 aa).

Residues 1–19 form the signal peptide; the sequence is MYPAHLLVLLAVCVSLLGA. Positions 20–27 are excised as a propeptide; it reads SDMPPQPL. 5 disulfides stabilise this stretch: Cys-38-Cys-99, Cys-54-Cys-144, Cys-56-Cys-72, Cys-71-Cys-127, and Cys-106-Cys-118. Residues Tyr-55, Gly-57, and Gly-59 each coordinate Ca(2+). His-75 is a catalytic residue. Asp-76 is a Ca(2+) binding site. Residue Asp-121 is part of the active site.

Belongs to the phospholipase A2 family. Group I subfamily. D49 sub-subfamily. The cofactor is Ca(2+). In terms of processing, this enzyme lacks two of the seven disulfide bonds found in similar PLA2 proteins. As to expression, expressed by the venom gland.

It localises to the secreted. The enzyme catalyses a 1,2-diacyl-sn-glycero-3-phosphocholine + H2O = a 1-acyl-sn-glycero-3-phosphocholine + a fatty acid + H(+). Its function is as follows. Snake venom phospholipase A2 (PLA2) that inhibits collagen-induced platelet aggregation. PLA2 catalyzes the calcium-dependent hydrolysis of the 2-acyl groups in 3-sn-phosphoglycerides. The sequence is that of Acidic phospholipase A2 S1-11 from Austrelaps superbus (Lowland copperhead snake).